The chain runs to 245 residues: Carbohydrate deacetylase 1 (245 aa).

Mg(2+) is bound by residues histidine 59 and histidine 125.

The protein belongs to the YdjC deacetylase family. Homodimer. The cofactor is Mg(2+).

Probably catalyzes the deacetylation of acetylated carbohydrates an important step in the degradation of oligosaccharides. The sequence is that of Carbohydrate deacetylase 1 from Listeria innocua serovar 6a (strain ATCC BAA-680 / CLIP 11262).